We begin with the raw amino-acid sequence, 272 residues long: Glutamate racemase (272 aa).

Substrate contacts are provided by residues 16 to 17 and 48 to 49; these read DS and YG. Cys-79 serves as the catalytic Proton donor/acceptor. 80–81 is a binding site for substrate; that stretch reads NT. The active-site Proton donor/acceptor is the Cys-191. Substrate is bound at residue 192–193; sequence TH.

The protein belongs to the aspartate/glutamate racemases family.

It carries out the reaction L-glutamate = D-glutamate. It functions in the pathway cell wall biogenesis; peptidoglycan biosynthesis. Provides the (R)-glutamate required for cell wall biosynthesis. The protein is Glutamate racemase of Chlorobaculum parvum (strain DSM 263 / NCIMB 8327) (Chlorobium vibrioforme subsp. thiosulfatophilum).